The primary structure comprises 216 residues: Adenylate kinase (216 aa).

Residue 10–15 (GAGKGT) participates in ATP binding. The interval 30-59 (STGDIFRKNISEKTPLGVKAKEYMDKGQLV) is NMP. Residues Thr-31, Arg-36, 57–59 (QLV), 85–88 (GFPR), and Gln-92 each bind AMP. Residues 126–163 (GRRVCPSCGASYHIKFNPPKIEGLCDVCKKEVIQRKDD) form an LID region. Arg-127 contributes to the ATP binding site. Cys-130 and Cys-133 together coordinate Zn(2+). 136-137 (SY) contributes to the ATP binding site. Zn(2+)-binding residues include Cys-150 and Cys-153. The AMP site is built by Arg-160 and Arg-171. Gln-199 lines the ATP pocket.

The protein belongs to the adenylate kinase family. In terms of assembly, monomer.

It localises to the cytoplasm. It catalyses the reaction AMP + ATP = 2 ADP. The protein operates within purine metabolism; AMP biosynthesis via salvage pathway; AMP from ADP: step 1/1. Catalyzes the reversible transfer of the terminal phosphate group between ATP and AMP. Plays an important role in cellular energy homeostasis and in adenine nucleotide metabolism. The polypeptide is Adenylate kinase (Clostridium novyi (strain NT)).